A 670-amino-acid chain; its full sequence is Oxidoreductase PigB (670 aa).

Residues 1–19 form the signal peptide; that stretch reads MIIQRLFGILYMLAGLAKA. Helical transmembrane passes span 53–73, 76–96, 98–118, and 238–258; these read GDVI…ILML, LWTT…VVIL, QSQP…LYML, and LVFF…VGFI.

This sequence belongs to the flavin monoamine oxidase family. FAD is required as a cofactor.

The protein localises to the membrane. The protein operates within antibiotic biosynthesis; prodigiosin biosynthesis. Its function is as follows. Involved in the biosynthesis of 2-methyl-3-n-amyl-pyrrole (MAP), one of the terminal products involved in the biosynthesis of the red antibiotic prodigiosin (Pig). Catalyzes the oxidation of dihydro form of MAP (H2MAP) to yield MAP. The sequence is that of Oxidoreductase PigB from Serratia sp. (strain ATCC 39006) (Prodigiosinella confusarubida).